We begin with the raw amino-acid sequence, 344 residues long: Phosphoserine phosphatase (344 aa).

The 73-residue stretch at 48–120 (VVTILGKDRV…ERLGLDIVMQ (73 aa)) folds into the ACT domain. Asp-135 (nucleophile) is an active-site residue. Mg(2+) is bound by residues Asp-135 and Asp-137. The Proton donor role is filled by Asp-137. Substrate is bound by residues Glu-144, Arg-180, 223–224 (SG), and Lys-268. Residue Asp-291 participates in Mg(2+) binding.

This sequence belongs to the HAD-like hydrolase superfamily. SerB family. Requires Mg(2+) as cofactor.

The catalysed reaction is O-phospho-L-serine + H2O = L-serine + phosphate. It carries out the reaction O-phospho-D-serine + H2O = D-serine + phosphate. It participates in amino-acid biosynthesis; L-serine biosynthesis; L-serine from 3-phospho-D-glycerate: step 3/3. This is Phosphoserine phosphatase from Archaeoglobus fulgidus (strain ATCC 49558 / DSM 4304 / JCM 9628 / NBRC 100126 / VC-16).